Reading from the N-terminus, the 592-residue chain is Aspartate--tRNA(Asp/Asn) ligase (592 aa).

E175 is a binding site for L-aspartate. The segment at 199-202 (QLFK) is aspartate. L-aspartate is bound at residue R221. Residues 221–223 (RDE) and Q230 contribute to the ATP site. H450 provides a ligand contact to L-aspartate. Position 483 (E483) interacts with ATP. R490 is an L-aspartate binding site. Residue 535-538 (GLDR) coordinates ATP.

This sequence belongs to the class-II aminoacyl-tRNA synthetase family. Type 1 subfamily. In terms of assembly, homodimer.

Its subcellular location is the cytoplasm. The enzyme catalyses tRNA(Asx) + L-aspartate + ATP = L-aspartyl-tRNA(Asx) + AMP + diphosphate. Aspartyl-tRNA synthetase with relaxed tRNA specificity since it is able to aspartylate not only its cognate tRNA(Asp) but also tRNA(Asn). Reaction proceeds in two steps: L-aspartate is first activated by ATP to form Asp-AMP and then transferred to the acceptor end of tRNA(Asp/Asn). This is Aspartate--tRNA(Asp/Asn) ligase from Acinetobacter baumannii (strain AB307-0294).